The chain runs to 268 residues: Leucyl/phenylalanyl-tRNA--protein transferase (268 aa).

The protein belongs to the L/F-transferase family.

The protein resides in the cytoplasm. The enzyme catalyses N-terminal L-lysyl-[protein] + L-leucyl-tRNA(Leu) = N-terminal L-leucyl-L-lysyl-[protein] + tRNA(Leu) + H(+). It carries out the reaction N-terminal L-arginyl-[protein] + L-leucyl-tRNA(Leu) = N-terminal L-leucyl-L-arginyl-[protein] + tRNA(Leu) + H(+). It catalyses the reaction L-phenylalanyl-tRNA(Phe) + an N-terminal L-alpha-aminoacyl-[protein] = an N-terminal L-phenylalanyl-L-alpha-aminoacyl-[protein] + tRNA(Phe). Functionally, functions in the N-end rule pathway of protein degradation where it conjugates Leu, Phe and, less efficiently, Met from aminoacyl-tRNAs to the N-termini of proteins containing an N-terminal arginine or lysine. This chain is Leucyl/phenylalanyl-tRNA--protein transferase, found in Zymomonas mobilis subsp. mobilis (strain ATCC 31821 / ZM4 / CP4).